Reading from the N-terminus, the 647-residue chain is Protein FAM161B (647 aa).

Disordered regions lie at residues M1–L39, S89–D110, and L135–S167. Residues P91–E105 show a composition bias toward acidic residues. Positions L262 to R292 form a coiled coil. Residues P332–T350 show a composition bias toward polar residues. Disordered regions lie at residues P332–Q352 and K388–S439. Residues L510–R546 adopt a coiled-coil conformation. Residues K583–A647 are disordered. Residues V590–R602 are compositionally biased toward basic and acidic residues. The span at H637 to A647 shows a compositional bias: polar residues.

It belongs to the FAM161 family. As to quaternary structure, interacts with FAM161A. In terms of tissue distribution, ubiquitously expressed.

The polypeptide is Protein FAM161B (FAM161B) (Homo sapiens (Human)).